A 470-amino-acid polypeptide reads, in one-letter code: Uronate isomerase (470 aa).

This sequence belongs to the metallo-dependent hydrolases superfamily. Uronate isomerase family.

It catalyses the reaction D-glucuronate = D-fructuronate. It carries out the reaction aldehydo-D-galacturonate = keto-D-tagaturonate. Its pathway is carbohydrate metabolism; pentose and glucuronate interconversion. The protein is Uronate isomerase of Vibrio vulnificus (strain YJ016).